The following is a 557-amino-acid chain: Iron-sulfur cluster assembly SufBD family protein ABCI8, chloroplastic (557 aa).

Residues M1 to P47 are disordered. Residues M1–R52 constitute a chloroplast transit peptide. Over residues S10 to P24 the composition is skewed to low complexity.

This sequence belongs to the iron-sulfur cluster assembly SufBD family.

It is found in the plastid. The protein localises to the chloroplast. Involved in light signaling, probably by mediating the transport and correct distribution of protoporphyrin IX, a chlorophyll precursor, in response to far-red light. The polypeptide is Iron-sulfur cluster assembly SufBD family protein ABCI8, chloroplastic (ABCI8) (Arabidopsis thaliana (Mouse-ear cress)).